The primary structure comprises 466 residues: Bifunctional protein GlmU (466 aa).

Residues 1–236 (MEVMPQPLTI…PAEALGINDR (236 aa)) are pyrophosphorylase. UDP-N-acetyl-alpha-D-glucosamine-binding positions include 13-16 (LAAG), lysine 27, glutamine 79, 84-85 (GT), 107-109 (YGD), glycine 146, glutamate 161, asparagine 176, and asparagine 234. Residue aspartate 109 coordinates Mg(2+). Asparagine 234 contacts Mg(2+). The tract at residues 237-257 (AQLAEVDRIFRDRKRRAVMAA) is linker. Residues 258 to 466 (GVTLIQPETI…AKKRRKLAKT (209 aa)) are N-acetyltransferase. Residues arginine 340 and lysine 358 each coordinate UDP-N-acetyl-alpha-D-glucosamine. The active-site Proton acceptor is the histidine 370. Residues tyrosine 373 and asparagine 384 each coordinate UDP-N-acetyl-alpha-D-glucosamine. Residues alanine 387, 393 to 394 (NY), serine 412, alanine 430, and arginine 447 contribute to the acetyl-CoA site.

The protein in the N-terminal section; belongs to the N-acetylglucosamine-1-phosphate uridyltransferase family. In the C-terminal section; belongs to the transferase hexapeptide repeat family. As to quaternary structure, homotrimer. Mg(2+) is required as a cofactor.

The protein resides in the cytoplasm. The catalysed reaction is alpha-D-glucosamine 1-phosphate + acetyl-CoA = N-acetyl-alpha-D-glucosamine 1-phosphate + CoA + H(+). It catalyses the reaction N-acetyl-alpha-D-glucosamine 1-phosphate + UTP + H(+) = UDP-N-acetyl-alpha-D-glucosamine + diphosphate. It functions in the pathway nucleotide-sugar biosynthesis; UDP-N-acetyl-alpha-D-glucosamine biosynthesis; N-acetyl-alpha-D-glucosamine 1-phosphate from alpha-D-glucosamine 6-phosphate (route II): step 2/2. The protein operates within nucleotide-sugar biosynthesis; UDP-N-acetyl-alpha-D-glucosamine biosynthesis; UDP-N-acetyl-alpha-D-glucosamine from N-acetyl-alpha-D-glucosamine 1-phosphate: step 1/1. Its pathway is bacterial outer membrane biogenesis; LPS lipid A biosynthesis. Functionally, catalyzes the last two sequential reactions in the de novo biosynthetic pathway for UDP-N-acetylglucosamine (UDP-GlcNAc). The C-terminal domain catalyzes the transfer of acetyl group from acetyl coenzyme A to glucosamine-1-phosphate (GlcN-1-P) to produce N-acetylglucosamine-1-phosphate (GlcNAc-1-P), which is converted into UDP-GlcNAc by the transfer of uridine 5-monophosphate (from uridine 5-triphosphate), a reaction catalyzed by the N-terminal domain. The sequence is that of Bifunctional protein GlmU from Solibacter usitatus (strain Ellin6076).